The following is a 496-amino-acid chain: Proline--tRNA ligase (496 aa).

The protein belongs to the class-II aminoacyl-tRNA synthetase family. ProS type 3 subfamily. In terms of assembly, homodimer.

Its subcellular location is the cytoplasm. It carries out the reaction tRNA(Pro) + L-proline + ATP = L-prolyl-tRNA(Pro) + AMP + diphosphate. Catalyzes the attachment of proline to tRNA(Pro) in a two-step reaction: proline is first activated by ATP to form Pro-AMP and then transferred to the acceptor end of tRNA(Pro). The protein is Proline--tRNA ligase of Phocaeicola vulgatus (strain ATCC 8482 / DSM 1447 / JCM 5826 / CCUG 4940 / NBRC 14291 / NCTC 11154) (Bacteroides vulgatus).